Consider the following 105-residue polypeptide: MNYMIFNSLIVQKYILNNAKAVATIRKKGYYKLYQKIILKVGDKRFYGKVIAKAPVTEYCLSKYVKFSGFENVENWLNEAKRLHNDKIDFERYEIIVIWINDSFF.

This is an uncharacterized protein from Saccharolobus islandicus (Sulfolobus islandicus).